Here is a 503-residue protein sequence, read N- to C-terminus: Cytochrome P450 monooxygenase ecdH (503 aa).

Residues 8–24 (TTLLCGVISSTLLLLLL) form a helical membrane-spanning segment. Asn64, Asn324, and Asn413 each carry an N-linked (GlcNAc...) asparagine glycan. Position 449 (Cys449) interacts with heme.

This sequence belongs to the cytochrome P450 family. Heme is required as a cofactor.

The protein localises to the membrane. It functions in the pathway antifungal biosynthesis. Functionally, cytochrome P450 monooxygenase; part of the gene cluster that mediates the biosynthesis of echinocandin B, a fungal lipidated cyclic hexapeptide that acts as an antifungal agent. Linoleoyl-AMP, produced by the fatty-acyl-AMP ligase ecdI, is transferred to the initiation carrier domain (T0) of ecdA. The linoleoyl-S-phosphopantetheinyl-T0 is sequentially extended with L-ornithine, L-threonine, L-proline, L-homotyrosine, L-threonine, and 4R-methyl-L-proline to form the linear hexapeptide. Thereafter, the terminal condensation (C7) performs macrocyclization of the NRPS product and the cyclic scaffold is released from ecdA. All six of the amino acid residues are hydroxylated, including 4R,5R-dihydroxy-L-ornithine, 4R-hydroxyl-L-proline, 3S,4S-dihydroxy-L-homotyrosine, and 3S-hydroxyl-4S-methyl-L-prolin. In the pathway, all the hydroxylation reactions are proposed to occur following completion of the cyclic peptide, so the unhydroxylated precursor produced by ecdA will undergo six rounds of hydroxylation. Five hydroxylase genes (ecdG, ecdH, ecdK, htyE and htyF) are embedded within the echinocandin B (ecd) and L-homotyrosine (hty) clusters. The chain is Cytochrome P450 monooxygenase ecdH from Aspergillus rugulosus (Emericella rugulosa).